Reading from the N-terminus, the 689-residue chain is Glycine--tRNA ligase beta subunit (689 aa).

This sequence belongs to the class-II aminoacyl-tRNA synthetase family. In terms of assembly, tetramer of two alpha and two beta subunits.

It localises to the cytoplasm. The catalysed reaction is tRNA(Gly) + glycine + ATP = glycyl-tRNA(Gly) + AMP + diphosphate. In Pseudoalteromonas translucida (strain TAC 125), this protein is Glycine--tRNA ligase beta subunit.